A 461-amino-acid polypeptide reads, in one-letter code: Autophagy-related protein 6 (461 aa).

The segment covering E75–S88 has biased composition (basic and acidic residues). Disordered regions lie at residues E75–V94 and E101–G124. Low complexity predominate over residues P103–S113. Positions T194–N286 form a coiled coil.

This sequence belongs to the beclin family.

In terms of biological role, required for cytoplasm to vacuole transport (Cvt) and autophagy. Also involved in endosome-to-Golgi retrograde transport. The chain is Autophagy-related protein 6 (ATG6) from Meyerozyma guilliermondii (strain ATCC 6260 / CBS 566 / DSM 6381 / JCM 1539 / NBRC 10279 / NRRL Y-324) (Yeast).